The primary structure comprises 437 residues: Aspartate aminotransferase, mitochondrial (437 aa).

The L-aspartate site is built by Gly-72, Trp-167, and Asn-220. Lys-284 bears the N6-(pyridoxal phosphate)lysine mark. Residue Arg-413 participates in L-aspartate binding.

The protein belongs to the class-I pyridoxal-phosphate-dependent aminotransferase family. As to quaternary structure, homodimer. Requires pyridoxal 5'-phosphate as cofactor.

The protein localises to the mitochondrion matrix. It carries out the reaction L-aspartate + 2-oxoglutarate = oxaloacetate + L-glutamate. Its function is as follows. Plays a key role in amino acid metabolism. Important for metabolite exchange between mitochondria and cytosol. The protein is Aspartate aminotransferase, mitochondrial of Schizosaccharomyces pombe (strain 972 / ATCC 24843) (Fission yeast).